A 467-amino-acid chain; its full sequence is Argininosuccinate lyase (467 aa).

It belongs to the lyase 1 family. Argininosuccinate lyase subfamily.

The protein resides in the cytoplasm. It carries out the reaction 2-(N(omega)-L-arginino)succinate = fumarate + L-arginine. The protein operates within amino-acid biosynthesis; L-arginine biosynthesis; L-arginine from L-ornithine and carbamoyl phosphate: step 3/3. The sequence is that of Argininosuccinate lyase from Allorhizobium ampelinum (strain ATCC BAA-846 / DSM 112012 / S4) (Agrobacterium vitis (strain S4)).